The sequence spans 193 residues: MSIETSEATVKIAPRLKTRYADEIKKTLQDDFSYVNVNQVPRLVKVVVNMGVGEAARDSKVIDGAVRDLTLITGQKPMVTKARKSIAQFKLREGMPIGAHTTLRGDRMWEFVDRLVTLALPRIRDFRGLSGKQFDGNGNYTFGLTEQVMFHEIDQDAIDKIRGMDITVVTTAKTDDEGRALLKALGFPFKSED.

It belongs to the universal ribosomal protein uL5 family. Part of the 50S ribosomal subunit; part of the 5S rRNA/L5/L18/L25 subcomplex. Contacts the 5S rRNA and the P site tRNA. Forms a bridge to the 30S subunit in the 70S ribosome.

Its function is as follows. This is one of the proteins that bind and probably mediate the attachment of the 5S RNA into the large ribosomal subunit, where it forms part of the central protuberance. In the 70S ribosome it contacts protein S13 of the 30S subunit (bridge B1b), connecting the 2 subunits; this bridge is implicated in subunit movement. Contacts the P site tRNA; the 5S rRNA and some of its associated proteins might help stabilize positioning of ribosome-bound tRNAs. This Renibacterium salmoninarum (strain ATCC 33209 / DSM 20767 / JCM 11484 / NBRC 15589 / NCIMB 2235) protein is Large ribosomal subunit protein uL5.